A 249-amino-acid polypeptide reads, in one-letter code: Flagellar brake protein YcgR (249 aa).

The 120-residue stretch at 117-236 folds into the PilZ domain; that stretch reads QRREFFRVDA…ERELQQVIFS (120 aa).

The protein belongs to the YcgR family. As to quaternary structure, monomer. Interacts with the flagellar basal bodies.

Its subcellular location is the bacterial flagellum basal body. Functionally, acts as a flagellar brake, regulating swimming and swarming in a bis-(3'-5') cyclic diguanylic acid (c-di-GMP)-dependent manner. Binds 1 c-di-GMP dimer per subunit. Increasing levels of c-di-GMP lead to decreased motility. The chain is Flagellar brake protein YcgR from Erwinia tasmaniensis (strain DSM 17950 / CFBP 7177 / CIP 109463 / NCPPB 4357 / Et1/99).